We begin with the raw amino-acid sequence, 425 residues long: NAC transcription factor ONAC010 (425 aa).

Residues 1 to 10 show a composition bias toward polar residues; the sequence is MESPDSSSGS. A disordered region spans residues 1–34; that stretch reads MESPDSSSGSAPPRVLRRQQQQPGSAPELPPGFR. The segment covering 12-23 has biased composition (low complexity); that stretch reads PPRVLRRQQQQP. The NAC domain occupies 29–200; it reads LPPGFRFHPT…DWVLCRIYKK (172 aa). Residues 129 to 206 mediate DNA binding; sequence VGVKKALVFY…IYKKTNKAGA (78 aa).

The protein localises to the nucleus. Transcription factor of the NAC family associated with male fertility. The protein is NAC transcription factor ONAC010 (ONAC010) of Oryza sativa subsp. indica (Rice).